The primary structure comprises 639 residues: Serine/threonine-protein phosphatase 2B catalytic subunit A1 (639 aa).

Fe cation-binding residues include Asp120, His122, and Asp148. Zn(2+) is bound by residues Asp148 and Asn180. His181 functions as the Proton donor in the catalytic mechanism. His229 and His311 together coordinate Zn(2+). Positions 494 to 503 (KSDIENERLP) are enriched in basic and acidic residues. The disordered stretch occupies residues 494 to 602 (KSDIENERLP…PSTRRRSLEN (109 aa)). Low complexity-rich tracts occupy residues 515–527 (ASPS…PATP) and 546–572 (TPIS…GGPP).

It belongs to the PPP phosphatase family. PP-2B subfamily. In terms of assembly, composed of two components (A and B), the A component is the catalytic subunit and the B component confers calcium sensitivity. Fe(3+) serves as cofactor. Requires Zn(2+) as cofactor.

It catalyses the reaction O-phospho-L-seryl-[protein] + H2O = L-seryl-[protein] + phosphate. The catalysed reaction is O-phospho-L-threonyl-[protein] + H2O = L-threonyl-[protein] + phosphate. Calcium-dependent, calmodulin-stimulated protein phosphatase. This subunit may have a role in the calmodulin activation of calcineurin. This Cryptococcus neoformans var. grubii serotype A (strain H99 / ATCC 208821 / CBS 10515 / FGSC 9487) (Filobasidiella neoformans var. grubii) protein is Serine/threonine-protein phosphatase 2B catalytic subunit A1 (CNA1).